The following is a 1036-amino-acid chain: MALRGAAGATDTPVSSAGGAPGGSASSSSTSSGGSASAGAGLWAALYDYEARGEDELSLRRGQLVEVLSQDAAVSGDEGWWAGQVQRRLGIFPANYVAPCRPAASPAPPPSRPSSPVHVAFERLELKELIGAGGFGQVYRATWQGQEVAVKAARQDPEQDAAAAAESVRREARLFAMLRHPNIIELRGVCLQQPHLCLVLEFARGGALNRALAAANAAPDPRAPGPRRARRIPPHVLVNWAVQIARGMLYLHEEAFVPILHRDLKSSNILLLEKIEHDDICNKTLKITDFGLAREWHRTTKMSTAGTYAWMAPEVIKSSLFSKGSDIWSYGVLLWELLTGEVPYRGIDGLAVAYGVAVNKLTLPIPSTCPEPFAKLMKECWQQDPHIRPSFALILEQLTAIEGAVMTEMPQESFHSMQDDWKLEIQQMFDELRTKEKELRSREEELTRAALQQKSQEELLKRREQQLAEREIDVLERELNILIFQLNQEKPKVKKRKGKFKRSRLKLKDGHRISLPSDFQHKITVQASPNLDKRRSLNSSSSSPPSSPTMMPRLRAIQLTSDESNKTWGRNTVFRQEEFEDVKRNFKKKGCTWGPNSIQMKDRTDCKERIRPLSDGNSPWSTILIKNQKTMPLASLFVDQPGSCEEPKLSPDGLEHRKPKQIKLPSQAYIDLPLGKDAQRENPAEAESWEEAASANAATVSIEMTPTNSLSRSPQRKKTESALYGCTVLLASVALGLDLRELHKAQAAEEPLPKEEKKKREGIFQRASKSRRSASPPTSLPSTCGEASSPPSLPLSSALGILSTPSFSTKCLLQMDSEDPLVDSAPVTCDSEMLTPDFCPTAPGSGREPALMPRLDTDCSVSRNLPSSFLQQTCGNVPYCASSKHRPSHHRRTMSDGNPTPTGATIISATGASALPLCPSPAPHSHLPREVSPKKHSTVHIVPQRRPASLRSRSDLPQAYPQTAVSQLAQTACVVGRPGPHPTQFLAAKERTKSHVPSLLDADVEGQSRDYTVPLCRMRSKTSRPSIYELEKEFLS.

Positions 1-36 (MALRGAAGATDTPVSSAGGAPGGSASSSSTSSGGSA) are disordered. Over residues 15–36 (SSAGGAPGGSASSSSTSSGGSA) the composition is skewed to low complexity. The SH3 domain maps to 38 to 102 (AGAGLWAALY…PANYVAPCRP (65 aa)). Positions 124 to 401 (LELKELIGAG…ALILEQLTAI (278 aa)) constitute a Protein kinase domain. Residues 130 to 138 (IGAGGFGQV) and lysine 151 contribute to the ATP site. Aspartate 263 functions as the Proton acceptor in the catalytic mechanism. Residue threonine 299 is modified to Phosphothreonine; by autocatalysis. Serine 303 carries the phosphoserine; by autocatalysis and MAP4K1 modification. 2 leucine-zipper regions span residues 425-446 (IQQMFDELRTKEKELRSREEEL) and 460-481 (LKRREQQLAEREIDVLERELNI). A disordered region spans residues 517 to 551 (SDFQHKITVQASPNLDKRRSLNSSSSSPPSSPTMM). Phosphoserine occurs at positions 528, 543, and 547. Phosphothreonine is present on threonine 592. At serine 614 the chain carries Phosphoserine. Basic and acidic residues predominate over residues 748–763 (AEEPLPKEEKKKREGI). Disordered stretches follow at residues 748-791 (AEEP…SSPP) and 923-954 (PHSHLPREVSPKKHSTVHIVPQRRPASLRSRS).

This sequence belongs to the protein kinase superfamily. STE Ser/Thr protein kinase family. MAP kinase kinase kinase subfamily. Homodimer. Interacts with TLR4. It depends on Mg(2+) as a cofactor. In terms of processing, autophosphorylation on serine and threonine residues within the activation loop plays a role in enzyme activation.

The catalysed reaction is L-seryl-[protein] + ATP = O-phospho-L-seryl-[protein] + ADP + H(+). It carries out the reaction L-threonyl-[protein] + ATP = O-phospho-L-threonyl-[protein] + ADP + H(+). Its activity is regulated as follows. Homodimerization via the leucine zipper domains is required for autophosphorylation and subsequent activation. Negative regulator of TLR4 signaling. Does not activate JNK1/MAPK8 pathway, p38/MAPK14, nor ERK2/MAPK1 pathways. The chain is Mitogen-activated protein kinase kinase kinase 21 from Homo sapiens (Human).